Here is a 496-residue protein sequence, read N- to C-terminus: Ammonium transporter 1 member 2 (496 aa).

11 helical membrane-spanning segments follow: residues 39-59, 74-94, 120-140, 148-168, 192-212, 236-256, 274-296, 307-327, 331-351, 360-380, and 412-432; these read LLFSAYLVFAMQLGFAMLCAG, VLDAAAGALFYYLFGFAFAFG, FFLFQWAFAIAAAGITSGSIA, YLIYSAFLTGFVYPVVSHWIW, FAGSGVVHMVGGVAGLWGALI, LVVLGSFLLWFGWYGFNPGSF, SAVGRTAVTTTLAGSTAALTTLF, VIDVCNGLLGGFAAITAGCSV, WAAIICGFVSAWVLIGLNALA, LEAAQLHGGCGAWGVIFTALF, and IVVILVIAAWVSFTMAPLFLV.

It belongs to the ammonia transporter channel (TC 1.A.11.2) family. In terms of tissue distribution, expressed in exodermis, sclerenchyma, endodermis and pericycle cells of primary root tips.

Its subcellular location is the membrane. Ammonium transporter probably involved in ammonium uptake from the soil and ammonium uptake and retrieval in the vascular system. In Oryza sativa subsp. japonica (Rice), this protein is Ammonium transporter 1 member 2 (AMT1-2).